Consider the following 339-residue polypeptide: Glycerol-3-phosphate dehydrogenase [NAD(P)+] (339 aa).

Positions 15, 16, 36, and 110 each coordinate NADPH. Residues Lys110, Gly139, and Thr141 each contribute to the sn-glycerol 3-phosphate site. Ala143 contributes to the NADPH binding site. Sn-glycerol 3-phosphate-binding residues include Lys195, Asp248, Ser258, Arg259, and Asn260. Lys195 functions as the Proton acceptor in the catalytic mechanism. Position 259 (Arg259) interacts with NADPH. Residues Val283 and Glu285 each contribute to the NADPH site.

This sequence belongs to the NAD-dependent glycerol-3-phosphate dehydrogenase family.

The protein localises to the cytoplasm. It carries out the reaction sn-glycerol 3-phosphate + NAD(+) = dihydroxyacetone phosphate + NADH + H(+). It catalyses the reaction sn-glycerol 3-phosphate + NADP(+) = dihydroxyacetone phosphate + NADPH + H(+). It functions in the pathway membrane lipid metabolism; glycerophospholipid metabolism. In terms of biological role, catalyzes the reduction of the glycolytic intermediate dihydroxyacetone phosphate (DHAP) to sn-glycerol 3-phosphate (G3P), the key precursor for phospholipid synthesis. This is Glycerol-3-phosphate dehydrogenase [NAD(P)+] from Escherichia fergusonii (strain ATCC 35469 / DSM 13698 / CCUG 18766 / IAM 14443 / JCM 21226 / LMG 7866 / NBRC 102419 / NCTC 12128 / CDC 0568-73).